The chain runs to 234 residues: Filarial antigen Av33 (234 aa).

An N-terminal signal peptide occupies residues 1–17; it reads MKILSCLLLCTITVLEG. A disulfide bond links C135 and C230. The interval 204 to 234 is disordered; that stretch reads TSQASEATTIPTTTQTPVEAPETPSFCVPIY. Residues 211–220 are compositionally biased toward low complexity; that stretch reads TTIPTTTQTP.

Belongs to the protease inhibitor I33 family.

The protein resides in the secreted. Aspartyl protease inhibitor. This Acanthocheilonema viteae (Filarial nematode worm) protein is Filarial antigen Av33.